Here is a 137-residue protein sequence, read N- to C-terminus: Gonadotropin subunit beta-1 (137 aa).

An N-terminal signal peptide occupies residues 1–24 (MYCTHLMTLQLVVMAMLWVTPVRA). 5 disulfides stabilise this stretch: C32-C78, C46-C93, C55-C108, C59-C110, and C113-C120. Residue N36 is glycosylated (N-linked (GlcNAc...) asparagine).

The protein belongs to the glycoprotein hormones subunit beta family. Heterodimer of an alpha and a beta chain.

It is found in the secreted. In terms of biological role, involved in gametogenesis and steroidogenesis. The protein is Gonadotropin subunit beta-1 (cgba) of Oncorhynchus keta (Chum salmon).